The sequence spans 160 residues: Globin CTT-Y (160 aa).

Residues 1–16 (MKVLAIFALCIIGALA) form the signal peptide. The Globin domain occupies 17-160 (TPCDDFKIMQ…IRKVINANLE (144 aa)). Heme b is bound by residues His-74 and His-109.

Belongs to the globin family.

The sequence is that of Globin CTT-Y (CTT-Y) from Chironomus thummi piger (Midge).